A 184-amino-acid chain; its full sequence is Inorganic pyrophosphatase (184 aa).

The substrate site is built by Lys-19, Arg-33, and Tyr-45. Mg(2+) contacts are provided by Asp-55, Asp-60, and Asp-92. Tyr-129 contacts substrate.

Belongs to the PPase family. In terms of assembly, homohexamer. Requires Mg(2+) as cofactor.

Its subcellular location is the cytoplasm. The catalysed reaction is diphosphate + H2O = 2 phosphate + H(+). Its function is as follows. Catalyzes the hydrolysis of inorganic pyrophosphate (PPi) forming two phosphate ions. The sequence is that of Inorganic pyrophosphatase from Mycoplasma genitalium (strain ATCC 33530 / DSM 19775 / NCTC 10195 / G37) (Mycoplasmoides genitalium).